The sequence spans 56 residues: Large ribosomal subunit protein bL32 (56 aa).

Positions 1–19 (MAVPKRKKSRSTTRHRRAQ) are enriched in basic residues. The segment at 1-22 (MAVPKRKKSRSTTRHRRAQWKT) is disordered.

Belongs to the bacterial ribosomal protein bL32 family.

The protein is Large ribosomal subunit protein bL32 of Cutibacterium acnes (strain DSM 16379 / KPA171202) (Propionibacterium acnes).